Consider the following 459-residue polypeptide: uncharacterized protein (459 aa).

The next 2 membrane-spanning stretches (helical) occupy residues Ile53 to Leu75 and Ala111 to Ala133. The tract at residues His174–Asn196 is disordered.

It localises to the cell membrane. This is an uncharacterized protein from Treponema pallidum (strain Nichols).